Here is a 588-residue protein sequence, read N- to C-terminus: Oxidoreductase NdmD (588 aa).

The region spanning 9-114 (WFPIATTEDL…VREKHGFIWT (106 aa)) is the Rieske domain. [2Fe-2S] cluster is bound by residues C50, H52, C69, and H72. An FAD-binding FR-type domain is found at 272-373 (PTHYICEVVT…TLPRNGFPLV (102 aa)). Residues 503 to 588 (YEVELKKTGQ…CKSKKIVLDL (86 aa)) form the 2Fe-2S ferredoxin-type domain. [2Fe-2S] cluster-binding residues include C537, C542, C545, and C575.

[2Fe-2S] cluster serves as cofactor.

Involved in the caffeine degradation, which is the essential first step for assimilating the carbon and nitrogen in caffeine. Catalyzes the oxidation of NADH and transfers electrons to NdmA and NdmB, which catalyze the N-demethylation reactions. This chain is Oxidoreductase NdmD (ndmD), found in Pseudomonas putida (Arthrobacter siderocapsulatus).